A 690-amino-acid polypeptide reads, in one-letter code: Protein arginine N-methyltransferase 7 (690 aa).

SAM-dependent MTase PRMT-type domains follow at residues 5–355 (FQDS…FSLW) and 364–690 (KEPL…EEEQ).

It belongs to the class I-like SAM-binding methyltransferase superfamily. Protein arginine N-methyltransferase family. PRMT7 subfamily.

Its function is as follows. Essential arginine methyltransferase that can both catalyze the formation of omega-N monomethylarginine (MMA) and symmetrical dimethylarginine (sDMA). Specifically mediates the symmetrical dimethylation of arginine residues in the small nuclear ribonucleoproteins SmD1 and SmD3. The sequence is that of Protein arginine N-methyltransferase 7 (Art7) from Anopheles gambiae (African malaria mosquito).